The primary structure comprises 200 residues: ATP synthase subunit delta', mitochondrial (200 aa).

A mitochondrion-targeting transit peptide spans 1 to 21 (MFRHSSRLLARATTMGWRRPF).

This sequence belongs to the ATPase epsilon chain family. In terms of assembly, F-type ATPases have 2 components, CF(1) - the catalytic core - and CF(0) - the membrane proton channel. CF(1) has five subunits: alpha(3), beta(3), gamma(1), delta(1), epsilon(1). CF(0) has three main subunits: a, b and c.

The protein localises to the mitochondrion. It localises to the mitochondrion inner membrane. Mitochondrial membrane ATP synthase (F(1)F(0) ATP synthase or Complex V) produces ATP from ADP in the presence of a proton gradient across the membrane which is generated by electron transport complexes of the respiratory chain. F-type ATPases consist of two structural domains, F(1) - containing the extramembraneous catalytic core, and F(0) - containing the membrane proton channel, linked together by a central stalk and a peripheral stalk. During catalysis, ATP turnover in the catalytic domain of F(1) is coupled via a rotary mechanism of the central stalk subunits to proton translocation. Part of the complex F(1) domain and of the central stalk which is part of the complex rotary element. Rotation of the central stalk against the surrounding alpha(3)beta(3) subunits leads to hydrolysis of ATP in three separate catalytic sites on the beta subunits. The chain is ATP synthase subunit delta', mitochondrial from Ipomoea batatas (Sweet potato).